The primary structure comprises 1075 residues: DNA-directed RNA polymerase subunit beta (1075 aa).

The protein belongs to the RNA polymerase beta chain family. As to quaternary structure, in plastids the minimal PEP RNA polymerase catalytic core is composed of four subunits: alpha, beta, beta', and beta''. When a (nuclear-encoded) sigma factor is associated with the core the holoenzyme is formed, which can initiate transcription.

The protein resides in the plastid. The protein localises to the chloroplast. It carries out the reaction RNA(n) + a ribonucleoside 5'-triphosphate = RNA(n+1) + diphosphate. Its function is as follows. DNA-dependent RNA polymerase catalyzes the transcription of DNA into RNA using the four ribonucleoside triphosphates as substrates. This Oryza sativa (Rice) protein is DNA-directed RNA polymerase subunit beta.